A 205-amino-acid polypeptide reads, in one-letter code: Ribosomal RNA small subunit methyltransferase G (205 aa).

S-adenosyl-L-methionine contacts are provided by residues Gly-73, Leu-78, 124–125, and Arg-139; that span reads VE.

Belongs to the methyltransferase superfamily. RNA methyltransferase RsmG family.

The protein localises to the cytoplasm. The enzyme catalyses guanosine(527) in 16S rRNA + S-adenosyl-L-methionine = N(7)-methylguanosine(527) in 16S rRNA + S-adenosyl-L-homocysteine. Its function is as follows. Specifically methylates the N7 position of guanine in position 527 of 16S rRNA. The sequence is that of Ribosomal RNA small subunit methyltransferase G from Methylobacillus flagellatus (strain ATCC 51484 / DSM 6875 / VKM B-1610 / KT).